Consider the following 222-residue polypeptide: Cytidylate kinase (222 aa).

7–15 serves as a coordination point for ATP; it reads GPAGAGKST.

Belongs to the cytidylate kinase family. Type 1 subfamily.

It is found in the cytoplasm. The enzyme catalyses CMP + ATP = CDP + ADP. It carries out the reaction dCMP + ATP = dCDP + ADP. This is Cytidylate kinase from Carboxydothermus hydrogenoformans (strain ATCC BAA-161 / DSM 6008 / Z-2901).